The following is a 60-amino-acid chain: SAPAQWKLWLVMDPRTVMIGTAAWLGVLALLIHFLLLGTERFNWIDTGLKEQKATAAAQA.

Residues 1–16 (SAPAQWKLWLVMDPRT) lie on the Cytoplasmic side of the membrane. Residues 17–37 (VMIGTAAWLGVLALLIHFLLL) traverse the membrane as a helical segment. A bacteriochlorophyll is bound at residue His33. Over 38–60 (GTERFNWIDTGLKEQKATAAAQA) the chain is Periplasmic.

This sequence belongs to the antenna complex alpha subunit family. The core complex is formed by different alpha and beta chains, binding bacteriochlorophyll molecules, and arranged most probably in tetrameric structures disposed around the reaction center. The non-pigmented gamma chains may constitute additional components.

The protein localises to the cell inner membrane. Antenna complexes are light-harvesting systems, which transfer the excitation energy to the reaction centers. The chain is Light-harvesting polypeptide B-885 alpha-2 chain from Rhodocyclus tenuis (Rhodospirillum tenue).